The primary structure comprises 269 residues: UPF0162 protein bbp_163 (269 aa).

It belongs to the UPF0162 family.

This Buchnera aphidicola subsp. Baizongia pistaciae (strain Bp) protein is UPF0162 protein bbp_163.